The chain runs to 419 residues: tRNA (guanine-N(7)-)-methyltransferase non-catalytic subunit wuho (419 aa).

The segment covering Ser-51–Glu-61 has biased composition (low complexity). Positions Ser-51–Asp-75 are disordered. WD repeat units follow at residues Ala-87–Val-127, Gly-174–Ser-213, and Gly-217–Arg-255.

It belongs to the WD repeat TRM82 family. Forms a heterodimer with the catalytic subunit Mettl1. Interacts with mei-P26 and weakly interacts with bgcn; required for the function or formation of the mei-P26-bgcn-bam-sxl complex. Interacts with nanos; may be involved in mei-P26-dependent derepression of the BMP signaling pathway. Interacts with Myc; the interaction may be mediated by mei-P26 and may be involved in the regulation of ribosome biogenesis. In terms of tissue distribution, in testis, it is present at high level in hub cells, a niche for germline stem cells of testis. Ubiquitously expressed in all testicular cells throughout spermatogenesis. Ubiquitously expressed in all germline and somatic cells of the ovary.

Its subcellular location is the nucleus. The protein resides in the cytoplasm. Its pathway is tRNA modification; N(7)-methylguanine-tRNA biosynthesis. In terms of biological role, required for the Mettl1-dependent formation of N(7)-methylguanine at position 46 (m7G46) in tRNA. In the Mettl1-wuho methyltransferase complex, it is required to stabilize and induce conformational changes of the catalytic subunit. Required for binding of nanos mRNA and repression of translation by the mei-P26-bgcn-bam-sxl complex. May cooperate with mei-P26 and nanos to derepress the BMP signaling pathway. May cooperate with mei-P26 to suppress expression of a subset of microRNAs. May cooperate with mei-P26 to regulate bam expression levels in germline cells during gametogenesis. Required to promote mitosis to meiosis transition during gametogenesis. May regulate germline cell division in part by regulating ribosome biogenesis. The chain is tRNA (guanine-N(7)-)-methyltransferase non-catalytic subunit wuho from Drosophila willistoni (Fruit fly).